The sequence spans 614 residues: ATP-dependent zinc metalloprotease FtsH (614 aa).

The Stromal segment spans residues 1 to 7 (MKKQWKK). A helical membrane pass occupies residues 8 to 28 (IVLFVLPVIITLITLSSFLFY). Topologically, residues 29–116 (NQDVVHNWSS…AHPSSSNVNL (88 aa)) are lumenal. Residues 117–137 (VSWLSNLLLPLILIITLFFFF) form a helical membrane-spanning segment. At 138–614 (RRGNKSSSGP…EFMRIVEERV (477 aa)) the chain is on the stromal side. 211–218 (GPPGTGKT) is a binding site for ATP. H432 is a Zn(2+) binding site. The active site involves E433. Zn(2+) contacts are provided by H436 and D510.

It in the central section; belongs to the AAA ATPase family. The protein in the C-terminal section; belongs to the peptidase M41 family. In terms of assembly, homohexamer. Zn(2+) serves as cofactor.

Its subcellular location is the plastid. It is found in the chloroplast thylakoid membrane. In terms of biological role, acts as a processive, ATP-dependent zinc metallopeptidase. In Cyanidium caldarium (Red alga), this protein is ATP-dependent zinc metalloprotease FtsH.